A 505-amino-acid polypeptide reads, in one-letter code: Poxin-Schlafen (505 aa).

The tract at residues 1–238 (MAMFYAHAFG…SKEERVDYVL (238 aa)) is poxin-like. Catalysis depends on histidine 17, which acts as the Proton donor. Residue tyrosine 138 is the Shared with catalytic histidine of dimeric partner of the active site. The Proton acceptor; shared with catalytic histidine of dimeric partner role is filled by lysine 142. The interval 239-505 (MKRLESIRHL…PDEWVSHIKF (267 aa)) is schlafen-like.

This sequence in the N-terminal section; belongs to the poxin family. In the C-terminal section; belongs to the Schlafen protein family. Subgroup poxviridae B3 subfamily. As to quaternary structure, homodimer.

It carries out the reaction 2',3'-cGAMP + H2O = Gp(2'-5')Ap(3') + H(+). In terms of biological role, nuclease that is responsible for viral evasion of host cGAS-STING innate immunity. Cleaves 2',3'-cGAMP which is produced by host cGAS following recognition of cytosolic DNA and blocks the subsequent 2',3'-cGAMP-mediated activation of TMEM173/STING, which normally spreads to adjacent cells and activates the interferon and NF-kappa-B immune responses. The chain is Poxin-Schlafen (OPG188) from Bos taurus (Bovine).